Reading from the N-terminus, the 282-residue chain is Pantothenate synthetase (282 aa).

Position 31–38 (31–38) interacts with ATP; that stretch reads MGALHDGH. The active-site Proton donor is the H38. A (R)-pantoate-binding site is contributed by Q62. Q62 lines the beta-alanine pocket. Residue 148 to 151 participates in ATP binding; sequence GKKD. Q154 is a binding site for (R)-pantoate. Residues V177 and 185–188 contribute to the ATP site; that span reads KSSR.

It belongs to the pantothenate synthetase family. In terms of assembly, homodimer.

Its subcellular location is the cytoplasm. The enzyme catalyses (R)-pantoate + beta-alanine + ATP = (R)-pantothenate + AMP + diphosphate + H(+). Its pathway is cofactor biosynthesis; (R)-pantothenate biosynthesis; (R)-pantothenate from (R)-pantoate and beta-alanine: step 1/1. In terms of biological role, catalyzes the condensation of pantoate with beta-alanine in an ATP-dependent reaction via a pantoyl-adenylate intermediate. The polypeptide is Pantothenate synthetase (Staphylococcus saprophyticus subsp. saprophyticus (strain ATCC 15305 / DSM 20229 / NCIMB 8711 / NCTC 7292 / S-41)).